The primary structure comprises 1070 residues: DNA-directed RNA polymerase subunit beta (1070 aa).

The protein belongs to the RNA polymerase beta chain family. In plastids the minimal PEP RNA polymerase catalytic core is composed of four subunits: alpha, beta, beta', and beta''. When a (nuclear-encoded) sigma factor is associated with the core the holoenzyme is formed, which can initiate transcription.

The protein localises to the plastid. The protein resides in the chloroplast. It catalyses the reaction RNA(n) + a ribonucleoside 5'-triphosphate = RNA(n+1) + diphosphate. Functionally, DNA-dependent RNA polymerase catalyzes the transcription of DNA into RNA using the four ribonucleoside triphosphates as substrates. This chain is DNA-directed RNA polymerase subunit beta, found in Spinacia oleracea (Spinach).